The primary structure comprises 208 residues: Probable DNA-3-methyladenine glycosylase (208 aa).

It belongs to the DNA glycosylase MPG family.

It localises to the nucleus. The catalysed reaction is Hydrolysis of alkylated DNA, releasing 3-methyladenine, 3-methylguanine, 7-methylguanine and 7-methyladenine.. Functionally, hydrolysis of the deoxyribose N-glycosidic bond to excise 3-methyladenine, and 7-methylguanine from the damaged DNA polymer formed by alkylation lesions. The sequence is that of Probable DNA-3-methyladenine glycosylase from Encephalitozoon cuniculi (strain GB-M1) (Microsporidian parasite).